A 277-amino-acid polypeptide reads, in one-letter code: MEMO1 family protein MTH_45 (277 aa).

This sequence belongs to the MEMO1 family.

This chain is MEMO1 family protein MTH_45, found in Methanothermobacter thermautotrophicus (strain ATCC 29096 / DSM 1053 / JCM 10044 / NBRC 100330 / Delta H) (Methanobacterium thermoautotrophicum).